Consider the following 474-residue polypeptide: Probable cytosol aminopeptidase (474 aa).

Residues K237 and D242 each coordinate Mn(2+). K249 is a catalytic residue. Residues D260, D319, and E321 each contribute to the Mn(2+) site. R323 is an active-site residue.

Belongs to the peptidase M17 family. Mn(2+) is required as a cofactor.

It localises to the cytoplasm. The enzyme catalyses Release of an N-terminal amino acid, Xaa-|-Yaa-, in which Xaa is preferably Leu, but may be other amino acids including Pro although not Arg or Lys, and Yaa may be Pro. Amino acid amides and methyl esters are also readily hydrolyzed, but rates on arylamides are exceedingly low.. It carries out the reaction Release of an N-terminal amino acid, preferentially leucine, but not glutamic or aspartic acids.. Its function is as follows. Presumably involved in the processing and regular turnover of intracellular proteins. Catalyzes the removal of unsubstituted N-terminal amino acids from various peptides. The protein is Probable cytosol aminopeptidase of Helicobacter hepaticus (strain ATCC 51449 / 3B1).